Here is a 374-residue protein sequence, read N- to C-terminus: Queuine tRNA-ribosyltransferase (374 aa).

Catalysis depends on aspartate 89, which acts as the Proton acceptor. Residues 89–93, aspartate 143, glutamine 187, and glycine 214 each bind substrate; that span reads DSGGF. The RNA binding stretch occupies residues 245 to 251; it reads GVGKPED. Aspartate 264 functions as the Nucleophile in the catalytic mechanism. The segment at 269–273 is RNA binding; important for wobble base 34 recognition; it reads TRNAR. 4 residues coordinate Zn(2+): cysteine 302, cysteine 304, cysteine 307, and histidine 333.

Belongs to the queuine tRNA-ribosyltransferase family. In terms of assembly, homodimer. Within each dimer, one monomer is responsible for RNA recognition and catalysis, while the other monomer binds to the replacement base PreQ1. Zn(2+) is required as a cofactor.

The catalysed reaction is 7-aminomethyl-7-carbaguanine + guanosine(34) in tRNA = 7-aminomethyl-7-carbaguanosine(34) in tRNA + guanine. It functions in the pathway tRNA modification; tRNA-queuosine biosynthesis. Functionally, catalyzes the base-exchange of a guanine (G) residue with the queuine precursor 7-aminomethyl-7-deazaguanine (PreQ1) at position 34 (anticodon wobble position) in tRNAs with GU(N) anticodons (tRNA-Asp, -Asn, -His and -Tyr). Catalysis occurs through a double-displacement mechanism. The nucleophile active site attacks the C1' of nucleotide 34 to detach the guanine base from the RNA, forming a covalent enzyme-RNA intermediate. The proton acceptor active site deprotonates the incoming PreQ1, allowing a nucleophilic attack on the C1' of the ribose to form the product. After dissociation, two additional enzymatic reactions on the tRNA convert PreQ1 to queuine (Q), resulting in the hypermodified nucleoside queuosine (7-(((4,5-cis-dihydroxy-2-cyclopenten-1-yl)amino)methyl)-7-deazaguanosine). This chain is Queuine tRNA-ribosyltransferase, found in Photorhabdus laumondii subsp. laumondii (strain DSM 15139 / CIP 105565 / TT01) (Photorhabdus luminescens subsp. laumondii).